A 669-amino-acid chain; its full sequence is GTP-binding protein 1 (669 aa).

Positions Met1–Ala32 are disordered. 8 positions are modified to phosphoserine: Ser6, Ser8, Ser12, Ser24, Ser25, Ser44, Ser47, and Ser69. The tr-type G domain occupies Phe158 to Tyr389. Residues Gly167–Ser174 are G1. Position 167 to 174 (Gly167 to Ser174) interacts with GTP. Residues Gly206 to Ser210 are G2. Residues Asp252–Gly255 are G3. GTP contacts are provided by residues Asp252–His256 and Thr308–Asp311. Positions Thr308–Asp311 are G4. The tract at residues Ser366 to Val368 is G5. Residues Leu573–Lys595 show a composition bias toward polar residues. The disordered stretch occupies residues Leu573–Cys669. The residue at position 580 (Ser580) is a Phosphoserine. A compositionally biased stretch (low complexity) spans Ser633–Gly645. A compositionally biased stretch (basic residues) spans Gly646–Lys657.

This sequence belongs to the TRAFAC class translation factor GTPase superfamily. Classic translation factor GTPase family. GTPBP1 subfamily. As to quaternary structure, interacts with EXOSC2/RRP4, EXOSC3/RRP40, EXOSC5/RRP46, HNRNPD, HNRNPR and SYNCRIP. Identified in a complex with AANAT mRNA, but does not bind mRNA by itself.

The protein localises to the cytoplasm. In terms of biological role, promotes degradation of target mRNA species. Plays a role in the regulation of circadian mRNA stability. Binds GTP and has GTPase activity. In Bos taurus (Bovine), this protein is GTP-binding protein 1 (GTPBP1).